Here is a 149-residue protein sequence, read N- to C-terminus: Small ribosomal subunit protein uS15 (149 aa).

A compositionally biased stretch (basic residues) spans 1 to 14; sequence MGRMHTHRHGKSHS. The segment at 1–20 is disordered; sequence MGRMHTHRHGKSHSIRPATL.

This sequence belongs to the universal ribosomal protein uS15 family. In terms of assembly, part of the 30S ribosomal subunit.

This Nitrosopumilus maritimus (strain SCM1) protein is Small ribosomal subunit protein uS15.